The following is a 478-amino-acid chain: Protein nucleotidyltransferase YdiU (478 aa).

ATP contacts are provided by Gly84, Gly86, Arg87, Lys107, Asp119, Gly120, Arg170, and Arg177. Asp246 functions as the Proton acceptor in the catalytic mechanism. Mg(2+)-binding residues include Asn247 and Asp256. Asp256 serves as a coordination point for ATP.

This sequence belongs to the SELO family. Mg(2+) is required as a cofactor. The cofactor is Mn(2+).

It catalyses the reaction L-seryl-[protein] + ATP = 3-O-(5'-adenylyl)-L-seryl-[protein] + diphosphate. The enzyme catalyses L-threonyl-[protein] + ATP = 3-O-(5'-adenylyl)-L-threonyl-[protein] + diphosphate. The catalysed reaction is L-tyrosyl-[protein] + ATP = O-(5'-adenylyl)-L-tyrosyl-[protein] + diphosphate. It carries out the reaction L-histidyl-[protein] + UTP = N(tele)-(5'-uridylyl)-L-histidyl-[protein] + diphosphate. It catalyses the reaction L-seryl-[protein] + UTP = O-(5'-uridylyl)-L-seryl-[protein] + diphosphate. The enzyme catalyses L-tyrosyl-[protein] + UTP = O-(5'-uridylyl)-L-tyrosyl-[protein] + diphosphate. Functionally, nucleotidyltransferase involved in the post-translational modification of proteins. It can catalyze the addition of adenosine monophosphate (AMP) or uridine monophosphate (UMP) to a protein, resulting in modifications known as AMPylation and UMPylation. The sequence is that of Protein nucleotidyltransferase YdiU from Shigella boydii serotype 18 (strain CDC 3083-94 / BS512).